The chain runs to 295 residues: Uridine and thymidine phosphorylase (295 aa).

Residues Arg-81 and 125–128 each bind phosphate; that span reads RLGT. Substrate-binding residues include Gln-203 and Arg-205.

This sequence belongs to the PNP/UDP phosphorylase family. Expressed in hypodermis, pharynx, spermatheca and gonad.

The catalysed reaction is uridine + phosphate = alpha-D-ribose 1-phosphate + uracil. The enzyme catalyses thymidine + phosphate = 2-deoxy-alpha-D-ribose 1-phosphate + thymine. It catalyses the reaction 2'-deoxyuridine + phosphate = 2-deoxy-alpha-D-ribose 1-phosphate + uracil. It functions in the pathway pyrimidine metabolism; UMP biosynthesis via salvage pathway; uracil from uridine (phosphorylase route): step 1/1. It participates in pyrimidine metabolism; dTMP biosynthesis via salvage pathway; dTMP from thymine: step 1/2. In terms of biological role, catalyzes the reversible phosphorylytic cleavage of uridine and thymidine to uracil and ribose-phosphate or thymine and deoxyribose-1-phosphate. The produced molecules are then utilized as carbon and energy sources or in the rescue of pyrimidine bases for nucleotide synthesis. Required for normal lifespan. The chain is Uridine and thymidine phosphorylase from Caenorhabditis elegans.